Consider the following 407-residue polypeptide: E3 ubiquitin-protein ligase TRIM13 (407 aa).

The RING-type zinc finger occupies 10–58 (CPICCSLFDDPRVLPCSHNFCKKCLEGILEGSVRNSLWRPAPFKCPTCR). The segment at 89 to 131 (PKMPVCKGHLGQPLNIFCLTDMQLICGICATRGEHTKHVFCSI) adopts a B box-type zinc-finger fold. The Zn(2+) site is built by cysteine 94, histidine 97, cysteine 117, and histidine 123. The stretch at 172 to 200 (LQLLTKDSDKVKEFFEKLQHTLDQKKNEI) forms a coiled coil. The helical transmembrane segment at 317–337 (LFLLILLLGLVIVFGPTMFLE) threads the bilayer.

This sequence belongs to the TRIM/RBCC family. Interacts (via C-terminal domain) with VCP. Interacts with AKT1; the interaction ubiquitinates AKT1 and leads to its proteasomal degradation. Interacts with MDM2; the interaction ubiquitinates AKT1 and leads to its proteasomal degradation. Interacts with p62/SQSTM1. Interacts with TRAF6. Interacts with IKBKG/NEMO. In terms of processing, auto-ubiquitinated; requires the RING-type zinc finger. Auto-polyubiquitination leads to proteasomal degradation.

It is found in the endoplasmic reticulum membrane. The enzyme catalyses S-ubiquitinyl-[E2 ubiquitin-conjugating enzyme]-L-cysteine + [acceptor protein]-L-lysine = [E2 ubiquitin-conjugating enzyme]-L-cysteine + N(6)-ubiquitinyl-[acceptor protein]-L-lysine.. The protein operates within protein modification; protein ubiquitination. Its function is as follows. Endoplasmic reticulum (ER) membrane anchored E3 ligase involved in the retrotranslocation and turnover of membrane and secretory proteins from the ER through a set of processes named ER-associated degradation (ERAD). This process acts on misfolded proteins as well as in the regulated degradation of correctly folded proteins. Enhances ionizing radiation-induced p53/TP53 stability and apoptosis via ubiquitinating MDM2 and AKT1 and decreasing AKT1 kinase activity through MDM2 and AKT1 proteasomal degradation. Regulates ER stress-induced autophagy, and may act as a tumor suppressor. Also plays a role in innate immune response by stimulating NF-kappa-B activity in the TLR2 signaling pathway. Ubiquitinates TRAF6 via the 'Lys-29'-linked polyubiquitination chain resulting in NF-kappa-B activation. Participates as well in T-cell receptor-mediated NF-kappa-B activation. In the presence of TNF, modulates the IKK complex by regulating IKBKG/NEMO ubiquitination leading to the repression of NF-kappa-B. This is E3 ubiquitin-protein ligase TRIM13 (TRIM13) from Homo sapiens (Human).